The primary structure comprises 208 residues: Adapter protein MecA (208 aa).

Belongs to the MecA family. As to quaternary structure, homodimer.

In terms of biological role, enables the recognition and targeting of unfolded and aggregated proteins to the ClpC protease or to other proteins involved in proteolysis. This chain is Adapter protein MecA, found in Exiguobacterium sibiricum (strain DSM 17290 / CCUG 55495 / CIP 109462 / JCM 13490 / 255-15).